The primary structure comprises 112 residues: Putative pterin-4-alpha-carbinolamine dehydratase (112 aa).

Belongs to the pterin-4-alpha-carbinolamine dehydratase family.

It carries out the reaction (4aS,6R)-4a-hydroxy-L-erythro-5,6,7,8-tetrahydrobiopterin = (6R)-L-erythro-6,7-dihydrobiopterin + H2O. This is Putative pterin-4-alpha-carbinolamine dehydratase from Shewanella halifaxensis (strain HAW-EB4).